Here is a 222-residue protein sequence, read N- to C-terminus: Eukaryotic translation initiation factor 3 subunit K (222 aa).

Residues 46–208 enclose the PCI domain; sequence YDLEANLAVL…KIKTKNITEK (163 aa).

It belongs to the eIF-3 subunit K family. As to quaternary structure, component of the eukaryotic translation initiation factor 3 (eIF-3) complex. The eIF-3 complex interacts with pix.

The protein resides in the cytoplasm. Its function is as follows. Component of the eukaryotic translation initiation factor 3 (eIF-3) complex, which is involved in protein synthesis of a specialized repertoire of mRNAs and, together with other initiation factors, stimulates binding of mRNA and methionyl-tRNAi to the 40S ribosome. The eIF-3 complex specifically targets and initiates translation of a subset of mRNAs involved in cell proliferation. The polypeptide is Eukaryotic translation initiation factor 3 subunit K (Drosophila grimshawi (Hawaiian fruit fly)).